A 1396-amino-acid chain; its full sequence is DNA-directed RNA polymerase subunit beta' (1396 aa).

Residues cysteine 72, cysteine 74, cysteine 87, and cysteine 90 each coordinate Zn(2+). Mg(2+) is bound by residues aspartate 463, aspartate 465, and aspartate 467. Positions 814, 889, 896, and 899 each coordinate Zn(2+).

It belongs to the RNA polymerase beta' chain family. As to quaternary structure, the RNAP catalytic core consists of 2 alpha, 1 beta, 1 beta' and 1 omega subunit. When a sigma factor is associated with the core the holoenzyme is formed, which can initiate transcription. Mg(2+) is required as a cofactor. Zn(2+) serves as cofactor.

The catalysed reaction is RNA(n) + a ribonucleoside 5'-triphosphate = RNA(n+1) + diphosphate. In terms of biological role, DNA-dependent RNA polymerase catalyzes the transcription of DNA into RNA using the four ribonucleoside triphosphates as substrates. In Chlamydia trachomatis serovar L2 (strain ATCC VR-902B / DSM 19102 / 434/Bu), this protein is DNA-directed RNA polymerase subunit beta'.